A 144-amino-acid chain; its full sequence is Large ribosomal subunit protein uL14 (144 aa).

The disordered stretch occupies residues 107–144 (NEGYTHSQHSNQREGGERIQAQPSPPHARRAVKTSFCR).

Belongs to the universal ribosomal protein uL14 family. As to quaternary structure, part of the 50S ribosomal subunit. Forms a cluster with proteins L3 and L19. In the 70S ribosome, L14 and L19 interact and together make contacts with the 16S rRNA in bridges B5 and B8.

In terms of biological role, binds to 23S rRNA. Forms part of two intersubunit bridges in the 70S ribosome. The chain is Large ribosomal subunit protein uL14 from Xanthobacter autotrophicus (strain ATCC BAA-1158 / Py2).